A 716-amino-acid chain; its full sequence is MQDDLLMDKSKTQPQSQQQQRQQQQQQQQLQPEPGAAEAPSTPLSSEIPKPEDSSAVPALSPASAPPAPNGPDKMQMESPLLPGLSFHQPPQQPPPPQEPTAPGASLSPSFGSTWSTGTTNAVEDSFFQGITPVNGTMLFQNFPHHVNPVFGGTFSPQIGLAQTQHHQQPPPPAPQPPQPAQPPQAQPSQQRRSPASPSQAPYAQRSAAAYGHQPIMTSKPSSSSAVAAAAAAAAASSASSSWNTHQSVNAAWSAPSNPWGGLQAGRDPRRAVGVGVGVGVGVPSPLNPISPLKKPFSSNVIAPPKFPRAAPLTSKSWMEDNAFRTDNGNNLLPFQDRSRPYDTFNLHSLENSLMDMIRTDHEPLKGKHYPNSGPPMSFADIMWRNHFAGRMGINFHHPGTDNIMALNTRSYGRRRGRSSLFPFEDAFLDDSHGDQALSSGLSSPTRCQNGERVERYSRKVFVGGLPPDIDEDEITASFRRFGPLVVDWPHKAESKSYFPPKGYAFLLFQEESSVQALIDACLEEDGKLYLCVSSPTIKDKPVQIRPWNLSDSDFVMDGSQPLDPRKTIFVGGVPRPLRAVELAMIMDRLYGGVCYAGIDTDPELKYPKGAGRVAFSNQQSYIAAISARFVQLQHNDIDKRVEVKPYVLDDQMCDECQGTRCGGKFAPFFCANVTCLQYYCEYCWASIHSRAGREFHKPLVKEGGDRPRHVPFRWS.

The span at 1–11 shows a compositional bias: basic and acidic residues; the sequence is MQDDLLMDKSK. Disordered regions lie at residues 1–118 and 162–209; these read MQDD…WSTG and AQTQ…RSAA. Composition is skewed to low complexity over residues 13-31 and 54-63; these read QPQS…QQLQ and SSAVPALSPA. Residues 91-100 show a composition bias toward pro residues; the sequence is PQQPPPPQEP. The span at 107-118 shows a compositional bias: polar residues; it reads LSPSFGSTWSTG. The segment covering 169–186 has biased composition (pro residues); it reads QPPPPAPQPPQPAQPPQA. Low complexity predominate over residues 187–209; sequence QPSQQRRSPASPSQAPYAQRSAA. Phosphoserine is present on residues Ser194, Ser197, and Ser291. Arg309 carries the asymmetric dimethylarginine modification. 2 positions are modified to phosphoserine: Ser419 and Ser420. RRM domains follow at residues 459-550 and 567-649; these read RKVF…PWNL and KTIF…PYVL.

The protein belongs to the RRM CPEB family. As to quaternary structure, following synaptic activity, aggregates to form amyloid-like oligomers. Aggregation requires an intact actin cytoskeleton. Interacts with STAT5B; this inhibits STAT5B-mediated transcriptional activation. Interacts with E3 ubiquitin-protein ligase NEURL1; this leads to monoubiquitination and activation of CPEB3. Interacts with CAPN2; this leads to cleavage of CPEB3. Interacts (via C-terminal RNA-binding region) with TOB1; TOB1 also binds CNOT7/CAF1 and recruits it to CPEB3 to form a ternary complex. Interacts with SUMO-conjugating enzyme UBC9. Interacts with IPO5; the interaction is enhanced in a RAN-regulated manner following neuronal stimulation and mediates CPEB3 nuclear import. Interacts with exportin XPO1/CRM1. In terms of processing, activated by NEURL1-mediated monoubiquitination, resulting in the growth of new dendritic spines and increased levels of GRIA1 and GRIA2. NEURL1-mediated monoubiquitination facilitates synaptic plasticity and hippocampal-dependent memory storage. Under basal unstimulated conditions when CPEB3 is mainly unaggregated, sumoylated and acts as a translational repressor. Following neuronal stimulation, becomes desumoylated and aggregated which is required for the translation of mRNA targets and for dendritic filopodia formation. Post-translationally, following neuronal stimulation, cleaved by CAPN2 which abolishes its translational repressor activity, leading to translation of CPEB3 target mRNAs. In terms of processing, phosphorylation is enhanced by neuronal stimulation. As to expression, highly expressed in brain (at protein level). In brain, expressed in the hippocampus, granule cells and interneurons of the cerebellum, and mitral cells of the olfactory bulb (at protein level). Detected in the spinal cord and in peripheral dorsal root ganglia (at protein level). In the retina, strongly expressed in the retinal ganglion layer and, to a lesser extent, in the inner margin of the inner nuclear layer with expression also detected in the inner and outer plexiform layers (at protein level). Highly expressed in brain and heart, less in liver, kidney, embryo, skeletal muscle, lung and ovary. Weakly expressed in granular cells of dentate gyrus and the pyramidal cells of CA3 and CA1 of the hippocampus.

Its subcellular location is the cytoplasm. The protein localises to the nucleus. The protein resides in the synapse. It localises to the cell projection. It is found in the dendrite. Its subcellular location is the postsynaptic density. In terms of biological role, sequence-specific RNA-binding protein which acts as a translational repressor in the basal unstimulated state but, following neuronal stimulation, acts as a translational activator. In contrast to CPEB1, does not bind to the cytoplasmic polyadenylation element (CPE), a uridine-rich sequence element within the mRNA 3'-UTR, but binds to a U-rich loop within a stem-loop structure. Required for the consolidation and maintenance of hippocampal-based long term memory. In the basal state, binds to the mRNA 3'-UTR of the glutamate receptors GRIA1 and GRIA2 and negatively regulates their translation. Also represses the translation of DLG4, GRIN1 GRIN2A and GRIN2B. When activated, acts as a translational activator of GRIA1 and GRIA2. In the basal state, suppresses SUMO2 translation but activates it following neuronal stimulation. Binds to the 3'-UTR of TRPV1 mRNA and represses TRPV1 translation which is required to maintain normal thermoception. Binds actin mRNA, leading to actin translational repression in the basal state and to translational activation following neuronal stimulation. Negatively regulates target mRNA levels by binding to TOB1 which recruits CNOT7/CAF1 to a ternary complex and this leads to target mRNA deadenylation and decay. In addition to its role in translation, binds to and inhibits the transcriptional activation activity of STAT5B without affecting its dimerization or DNA-binding activity. This, in turn, represses transcription of the STAT5B target gene EGFR which has been shown to play a role in enhancing learning and memory performance. In contrast to CPEB1, CPEB2 and CPEB4, not required for cell cycle progression. The chain is Cytoplasmic polyadenylation element-binding protein 3 (Cpeb3) from Mus musculus (Mouse).